Consider the following 236-residue polypeptide: Orotidine 5'-phosphate decarboxylase (236 aa).

Residues Asp-17, Lys-39, Asp-66 to Thr-75, Thr-125, Arg-187, Gln-196, Gly-216, and Arg-217 contribute to the substrate site. Lys-68 acts as the Proton donor in catalysis.

Belongs to the OMP decarboxylase family. Type 1 subfamily. In terms of assembly, homodimer.

It catalyses the reaction orotidine 5'-phosphate + H(+) = UMP + CO2. Its pathway is pyrimidine metabolism; UMP biosynthesis via de novo pathway; UMP from orotate: step 2/2. In terms of biological role, catalyzes the decarboxylation of orotidine 5'-monophosphate (OMP) to uridine 5'-monophosphate (UMP). This Buchnera aphidicola subsp. Baizongia pistaciae (strain Bp) protein is Orotidine 5'-phosphate decarboxylase.